Reading from the N-terminus, the 1108-residue chain is Alpha-mannosidase 2 (1108 aa).

The Cytoplasmic segment spans residues 1 to 9 (MLRIRRRFA). A helical; Signal-anchor for type II membrane protein membrane pass occupies residues 10-30 (LVICSGCLLVFLSLYIILNFA). The Lumenal segment spans residues 31 to 1108 (APAATQIKPN…TAAYVSSHSS (1078 aa)). The tract at residues 70–92 (AETSNRDDPIRPPLKVARSPRPG) is disordered. Positions 153, 155, 267, and 534 each coordinate Zn(2+). The active-site Nucleophile is the Asp-267.

It belongs to the glycosyl hydrolase 38 family. As to quaternary structure, homodimer; disulfide-linked. Zn(2+) serves as cofactor.

The protein localises to the golgi apparatus membrane. It catalyses the reaction N(4)-{beta-D-GlcNAc-(1-&gt;2)-alpha-D-Man-(1-&gt;3)-[alpha-D-Man-(1-&gt;3)-[alpha-D-Man-(1-&gt;6)]-alpha-D-Man-(1-&gt;6)]-beta-D-Man-(1-&gt;4)-beta-D-GlcNAc-(1-&gt;4)-beta-D-GlcNAc}-L-asparaginyl-[protein] + 2 H2O = 2 alpha-D-mannopyranose + an N(4)-{beta-D-GlcNAc-(1-&gt;2)-alpha-D-Man-(1-&gt;3)-[alpha-D-Man-(1-&gt;6)]-beta-D-Man-(1-&gt;4)-beta-D-GlcNAc-(1-&gt;4)-beta-D-GlcNAc}-L-asparaginyl-[protein]. It functions in the pathway protein modification; protein glycosylation. Its function is as follows. Catalyzes the first committed step in the biosynthesis of complex N-glycans. It controls conversion of high mannose to complex N-glycans; the final hydrolytic step in the N-glycan maturation pathway. This is Alpha-mannosidase 2 from Drosophila melanogaster (Fruit fly).